A 345-amino-acid chain; its full sequence is S-adenosylmethionine:tRNA ribosyltransferase-isomerase (345 aa).

This sequence belongs to the QueA family. In terms of assembly, monomer.

The protein resides in the cytoplasm. The catalysed reaction is 7-aminomethyl-7-carbaguanosine(34) in tRNA + S-adenosyl-L-methionine = epoxyqueuosine(34) in tRNA + adenine + L-methionine + 2 H(+). The protein operates within tRNA modification; tRNA-queuosine biosynthesis. Its function is as follows. Transfers and isomerizes the ribose moiety from AdoMet to the 7-aminomethyl group of 7-deazaguanine (preQ1-tRNA) to give epoxyqueuosine (oQ-tRNA). In Anaeromyxobacter dehalogenans (strain 2CP-1 / ATCC BAA-258), this protein is S-adenosylmethionine:tRNA ribosyltransferase-isomerase.